The following is a 688-amino-acid chain: Homoaconitase, mitochondrial (688 aa).

Residues 1–19 constitute a mitochondrion transit peptide; sequence MALLYLSTRSSLKKTGARC. Residues Cys-346, Cys-406, and Cys-409 each coordinate [4Fe-4S] cluster.

This sequence belongs to the aconitase/IPM isomerase family. It depends on [4Fe-4S] cluster as a cofactor.

The protein localises to the mitochondrion. It catalyses the reaction (2R,3S)-homoisocitrate = cis-homoaconitate + H2O. The protein operates within amino-acid biosynthesis; L-lysine biosynthesis via AAA pathway; L-alpha-aminoadipate from 2-oxoglutarate: step 3/5. In terms of biological role, catalyzes the reversible hydration of cis-homoaconitate to (2R,3S)-homoisocitrate, a step in the alpha-aminoadipate pathway for lysine biosynthesis. The chain is Homoaconitase, mitochondrial (LYS4) from Debaryomyces hansenii (strain ATCC 36239 / CBS 767 / BCRC 21394 / JCM 1990 / NBRC 0083 / IGC 2968) (Yeast).